A 31-amino-acid chain; its full sequence is Cyclotide vico-A (31 aa).

The cyclopeptide (Gly-Asn) cross-link spans 1–31 (GSIPCAESCVYIPCFTGIAGCSCKNKVCYYN). 3 disulfides stabilise this stretch: cysteine 5–cysteine 21, cysteine 9–cysteine 23, and cysteine 14–cysteine 28.

It belongs to the cyclotide family. Bracelet subfamily. In terms of processing, this is a cyclic peptide.

Probably participates in a plant defense mechanism. This Viola cotyledon (Violeta) protein is Cyclotide vico-A.